We begin with the raw amino-acid sequence, 441 residues long: MFS-type transporter (441 aa).

The interval 1-47 is disordered; that stretch reads MPPQQEQDTDSDAIRSYNEESKSETPGCIPDAMLSSDETSNDVASDI. A run of 10 helical transmembrane segments spans residues 61 to 81, 95 to 115, 125 to 145, 150 to 170, 183 to 203, 212 to 232, 259 to 279, 289 to 309, 323 to 343, and 351 to 371; these read TLCG…FGIF, DISW…AFVG, LVLS…SLST, LILS…TPAV, LAIG…NSMA, FGWT…FVVV, FFTI…YYIA, TLTY…GVFG, LELL…WIAV, and VWTV…PAGI. Asparagine 388 is a glycosylation site (N-linked (GlcNAc...) asparagine). 2 consecutive transmembrane segments (helical) span residues 389-409 and 415-435; these read FTVI…IITA and YGAQ…IVAA.

Belongs to the major facilitator superfamily. Monocarboxylate porter (TC 2.A.1.13) family.

It is found in the membrane. In terms of biological role, MFS-type transporter; part of the gene cluster that mediates the biosynthesis of butenolide, a mycotoxin that shows antibiotic activity but does not seem to play a major role in the spread of head blight in wheat. The polypeptide is MFS-type transporter (Gibberella zeae (strain ATCC MYA-4620 / CBS 123657 / FGSC 9075 / NRRL 31084 / PH-1) (Wheat head blight fungus)).